An 884-amino-acid polypeptide reads, in one-letter code: Probable mixed-linked glucan synthase 9 (884 aa).

A compositionally biased stretch (low complexity) spans 1–27 (MALSPAAAGRTGRNNNNDAGLADPLLP). Residues 1–34 (MALSPAAAGRTGRNNNNDAGLADPLLPAGGGGGG) form a disordered region. The next 2 membrane-spanning stretches (helical) occupy residues 73-93 (VLLHPYRLLTLVRLIAVVLFL) and 104-124 (AMWLWWISIAGDFWFGVTWLL). Residue aspartate 195 is part of the active site. Substrate-binding residues include aspartate 396 and aspartate 398. Residue aspartate 565 is part of the active site. 6 helical membrane passes run 640–660 (TAYPVSALFMVVYDLLPVIWL), 672–692 (FSTYVAYLVAVIAMIEVIGLV), 708–728 (EQFYMIGATGVYLAAVLHIVL), 765–785 (LLAPTVVVMAVNVTAIGAAAG), 802–822 (AGLVFNVWVLVLLYPFALGIM), and 830–850 (CALFALLVAACAAVAAGFVAV).

It belongs to the glycosyltransferase 2 family. Plant cellulose synthase-like F subfamily.

It localises to the golgi apparatus membrane. Its function is as follows. May catalyze both beta-1,3 and beta-1,4 glycosidic linkage on beta-D-glucan. Essential for (1,3;1,4)-beta-D-glucans synthesis in grasses and cereals (Poaceae). The mixed-linked glucans (which are not present in walls of dicotyledons or most other monocotyledonous plants) are particularly important constituents of the walls of the starchy endosperm and aleurone cells of cereal grains such as oats, wheat, rice and barley. They can account for up to 70% by weight of the wall. The protein is Probable mixed-linked glucan synthase 9 (CSLF9) of Oryza sativa subsp. japonica (Rice).